Reading from the N-terminus, the 166-residue chain is ATP synthase subunit b (166 aa).

Residues 10 to 30 (LLFWMIVSFGIVFVILSKYGF) traverse the membrane as a helical segment.

Belongs to the ATPase B chain family. In terms of assembly, F-type ATPases have 2 components, F(1) - the catalytic core - and F(0) - the membrane proton channel. F(1) has five subunits: alpha(3), beta(3), gamma(1), delta(1), epsilon(1). F(0) has three main subunits: a(1), b(2) and c(10-14). The alpha and beta chains form an alternating ring which encloses part of the gamma chain. F(1) is attached to F(0) by a central stalk formed by the gamma and epsilon chains, while a peripheral stalk is formed by the delta and b chains.

It is found in the cell inner membrane. Its function is as follows. F(1)F(0) ATP synthase produces ATP from ADP in the presence of a proton or sodium gradient. F-type ATPases consist of two structural domains, F(1) containing the extramembraneous catalytic core and F(0) containing the membrane proton channel, linked together by a central stalk and a peripheral stalk. During catalysis, ATP synthesis in the catalytic domain of F(1) is coupled via a rotary mechanism of the central stalk subunits to proton translocation. In terms of biological role, component of the F(0) channel, it forms part of the peripheral stalk, linking F(1) to F(0). The chain is ATP synthase subunit b from Parabacteroides distasonis (strain ATCC 8503 / DSM 20701 / CIP 104284 / JCM 5825 / NCTC 11152).